Consider the following 507-residue polypeptide: ATP synthase subunit alpha, chloroplastic (507 aa).

170–177 (IGDRQTGK) contacts ATP.

The protein belongs to the ATPase alpha/beta chains family. As to quaternary structure, F-type ATPases have 2 components, CF(1) - the catalytic core - and CF(0) - the membrane proton channel. CF(1) has five subunits: alpha(3), beta(3), gamma(1), delta(1), epsilon(1). CF(0) has four main subunits: a, b, b' and c.

Its subcellular location is the plastid. It localises to the chloroplast thylakoid membrane. It carries out the reaction ATP + H2O + 4 H(+)(in) = ADP + phosphate + 5 H(+)(out). Produces ATP from ADP in the presence of a proton gradient across the membrane. The alpha chain is a regulatory subunit. In Adiantum capillus-veneris (Maidenhair fern), this protein is ATP synthase subunit alpha, chloroplastic.